The primary structure comprises 281 residues: Ribosomal RNA small subunit methyltransferase A (281 aa).

Asn-36, Leu-38, Gly-63, Glu-84, Asp-109, and Asn-127 together coordinate S-adenosyl-L-methionine.

The protein belongs to the class I-like SAM-binding methyltransferase superfamily. rRNA adenine N(6)-methyltransferase family. RsmA subfamily.

The protein localises to the cytoplasm. It catalyses the reaction adenosine(1518)/adenosine(1519) in 16S rRNA + 4 S-adenosyl-L-methionine = N(6)-dimethyladenosine(1518)/N(6)-dimethyladenosine(1519) in 16S rRNA + 4 S-adenosyl-L-homocysteine + 4 H(+). In terms of biological role, specifically dimethylates two adjacent adenosines (A1518 and A1519) in the loop of a conserved hairpin near the 3'-end of 16S rRNA in the 30S particle. May play a critical role in biogenesis of 30S subunits. The protein is Ribosomal RNA small subunit methyltransferase A of Borreliella burgdorferi (strain ATCC 35210 / DSM 4680 / CIP 102532 / B31) (Borrelia burgdorferi).